The primary structure comprises 407 residues: BMP-like protein unc-129 (407 aa).

The first 18 residues, Met-1–Cys-18, serve as a signal peptide directing secretion. N-linked (GlcNAc...) asparagine glycans are attached at residues Asn-27, Asn-42, and Asn-211. A disordered region spans residues Asp-252–Glu-283. Asn-395 is a glycosylation site (N-linked (GlcNAc...) asparagine).

It belongs to the TGF-beta family. In terms of assembly, interacts with netrin receptor unc-5; the interaction is direct.

Its subcellular location is the secreted. The protein resides in the extracellular space. Required for the migration of axonal growth-cones and distal tip cells (DTC) along the dorsal-ventral axis of the body wall. Acts cell nonautonomously and independently of the classical daf-4, sma-6 or daf-1 TGFbeta receptor signaling. During axon migration, facilitates long-range repulsive guidance of unc-6/netrin by enhancing unc-5-unc-40 signaling at the expense of unc-5 alone signaling, probably through direct interaction with receptor unc-5. Involved in cell-cell contact formation in sensory rays in the developing male tail, via a pathway involving plx-2 and mab-20/semaphorin-2A. This Caenorhabditis elegans protein is BMP-like protein unc-129.